The following is a 251-amino-acid chain: Hydroxyacylglutathione hydrolase (251 aa).

Residues His53, His55, Asp57, His58, His110, Asp127, and His165 each contribute to the Zn(2+) site.

Belongs to the metallo-beta-lactamase superfamily. Glyoxalase II family. Monomer. Requires Zn(2+) as cofactor.

It catalyses the reaction an S-(2-hydroxyacyl)glutathione + H2O = a 2-hydroxy carboxylate + glutathione + H(+). It participates in secondary metabolite metabolism; methylglyoxal degradation; (R)-lactate from methylglyoxal: step 2/2. In terms of biological role, thiolesterase that catalyzes the hydrolysis of S-D-lactoyl-glutathione to form glutathione and D-lactic acid. This chain is Hydroxyacylglutathione hydrolase, found in Edwardsiella ictaluri (strain 93-146).